A 341-amino-acid chain; its full sequence is Major capsid protein (341 aa).

Residues 109–129 (RRIILQNMKDEELAIAQVEEK) are a coiled coil.

Belongs to the lambda phage major capsid protein family. Homomultimer.

The protein resides in the virion. It localises to the host cytoplasm. Functionally, assembles to form an icosahedral capsid with a T=7 symmetry. The icosahedral capsid is about 60 nm in diameter and composed of 415 major capsid proteins. The assembly is primed by the interaction between capsid assembly protease and portal dodecamer, and major capsid proteins assemble cooperatively to form the procapsid with the help of capsid scaffolding protein. Major capsid protein forms hexons and pentons of the icosahedron. Viral genomic DNA is packaged into the procapsid through the portal vertex. The packaging triggers a dramatic reconfiguration of the capsid shell. The chain is Major capsid protein from Escherichia coli (Bacteriophage N15).